The following is an 89-amino-acid chain: Elongation factor 1-beta (89 aa).

The protein belongs to the EF-1-beta/EF-1-delta family.

Functionally, promotes the exchange of GDP for GTP in EF-1-alpha/GDP, thus allowing the regeneration of EF-1-alpha/GTP that could then be used to form the ternary complex EF-1-alpha/GTP/AAtRNA. The protein is Elongation factor 1-beta of Methanococcus maripaludis (strain DSM 14266 / JCM 13030 / NBRC 101832 / S2 / LL).